We begin with the raw amino-acid sequence, 698 residues long: Protein artemis (698 aa).

Thr-380 carries the phosphothreonine modification. Ser-385 carries the phosphoserine modification. 3 disordered regions span residues 445 to 485 (ANFV…DPDV), 505 to 595 (LENL…DSIS), and 620 to 669 (NGVP…LPKP). Positions 449-461 (DCDESNSDSEGEL) are enriched in acidic residues. Residues 508-521 (LPSSIETGGSQSPK) are compositionally biased toward polar residues. Low complexity predominate over residues 538 to 551 (THISSQNSSQSTHI). Residues 552–583 (TDQGSQGWDSQCDTVLLSSQEKSGGDSTSLNK) are compositionally biased toward polar residues. Low complexity predominate over residues 641-655 (TSLTSTQADSQSSSD). A Phosphoserine; by ATM modification is found at Ser-650.

It belongs to the DNA repair metallo-beta-lactamase (DRMBL) family. As to quaternary structure, interacts with LIG4; the interaction is direct. Interacts with ATM. Interacts with BRCA1. Interacts with PRKDC. Interacts with TP53BP1. Also exhibits ATM- and phosphorylation-dependent interaction with the MRN complex, composed of MRE11, RAD50, and NBN. In terms of processing, phosphorylation on undefined residues by PRKDC may stimulate endonucleolytic activity on 5' and 3' hairpins and overhangs. PRKDC must remain present, even after phosphorylation, for efficient hairpin opening. Also phosphorylated by ATM in response to ionizing radiation (IR) and by ATR in response to ultraviolet (UV) radiation.

Its subcellular location is the nucleus. Functionally, required for V(D)J recombination, the process by which exons encoding the antigen-binding domains of immunoglobulins and T-cell receptor proteins are assembled from individual V, (D), and J gene segments. V(D)J recombination is initiated by the lymphoid specific RAG endonuclease complex, which generates site specific DNA double strand breaks (DSBs). These DSBs present two types of DNA end structures: hairpin sealed coding ends and phosphorylated blunt signal ends. These ends are independently repaired by the non homologous end joining (NHEJ) pathway to form coding and signal joints respectively. This protein exhibits single-strand specific 5'-3' exonuclease activity in isolation, and acquires endonucleolytic activity on 5' and 3' hairpins and overhangs when in a complex with PRKDC. The latter activity is required specifically for the resolution of closed hairpins prior to the formation of the coding joint. May also be required for the repair of complex DSBs induced by ionizing radiation, which require substantial end-processing prior to religation by NHEJ. In Rattus norvegicus (Rat), this protein is Protein artemis (Dclre1c).